Consider the following 463-residue polypeptide: Exodeoxyribonuclease 7 large subunit (463 aa).

This sequence belongs to the XseA family. As to quaternary structure, heterooligomer composed of large and small subunits.

It is found in the cytoplasm. The enzyme catalyses Exonucleolytic cleavage in either 5'- to 3'- or 3'- to 5'-direction to yield nucleoside 5'-phosphates.. Functionally, bidirectionally degrades single-stranded DNA into large acid-insoluble oligonucleotides, which are then degraded further into small acid-soluble oligonucleotides. This is Exodeoxyribonuclease 7 large subunit from Bordetella bronchiseptica (strain ATCC BAA-588 / NCTC 13252 / RB50) (Alcaligenes bronchisepticus).